The primary structure comprises 141 residues: Putative lipoprotein Tanf_09445 (141 aa).

The N-terminal stretch at 1–20 (MKQKIILWIGALLLLTAGTG) is a signal peptide. A lipid anchor (N-palmitoyl cysteine) is attached at C21. C21 carries the S-diacylglycerol cysteine lipid modification.

It localises to the cell membrane. The chain is Putative lipoprotein Tanf_09445 from Tannerella forsythia (strain ATCC 43037 / JCM 10827 / CCUG 21028 A / KCTC 5666 / FDC 338) (Bacteroides forsythus).